The sequence spans 331 residues: Holliday junction branch migration complex subunit RuvB (331 aa).

Residues 1 to 182 (MDDRMVDQAL…FGVHLRLEYY (182 aa)) are large ATPase domain (RuvB-L). ATP contacts are provided by residues Leu21, Arg22, Gly63, Lys66, Thr67, Thr68, 129–131 (EDF), Arg172, Tyr182, and Arg219. A Mg(2+)-binding site is contributed by Thr67. Residues 183 to 253 (NENDLKEIII…TTKQALQLLQ (71 aa)) are small ATPAse domain (RuvB-S). Positions 256 to 331 (AEGLDYIDHK…AYEHFKNFNK (76 aa)) are head domain (RuvB-H). The DNA site is built by Arg292, Arg311, and Arg316.

Belongs to the RuvB family. Homohexamer. Forms an RuvA(8)-RuvB(12)-Holliday junction (HJ) complex. HJ DNA is sandwiched between 2 RuvA tetramers; dsDNA enters through RuvA and exits via RuvB. An RuvB hexamer assembles on each DNA strand where it exits the tetramer. Each RuvB hexamer is contacted by two RuvA subunits (via domain III) on 2 adjacent RuvB subunits; this complex drives branch migration. In the full resolvosome a probable DNA-RuvA(4)-RuvB(12)-RuvC(2) complex forms which resolves the HJ.

Its subcellular location is the cytoplasm. It catalyses the reaction ATP + H2O = ADP + phosphate + H(+). In terms of biological role, the RuvA-RuvB-RuvC complex processes Holliday junction (HJ) DNA during genetic recombination and DNA repair, while the RuvA-RuvB complex plays an important role in the rescue of blocked DNA replication forks via replication fork reversal (RFR). RuvA specifically binds to HJ cruciform DNA, conferring on it an open structure. The RuvB hexamer acts as an ATP-dependent pump, pulling dsDNA into and through the RuvAB complex. RuvB forms 2 homohexamers on either side of HJ DNA bound by 1 or 2 RuvA tetramers; 4 subunits per hexamer contact DNA at a time. Coordinated motions by a converter formed by DNA-disengaged RuvB subunits stimulates ATP hydrolysis and nucleotide exchange. Immobilization of the converter enables RuvB to convert the ATP-contained energy into a lever motion, pulling 2 nucleotides of DNA out of the RuvA tetramer per ATP hydrolyzed, thus driving DNA branch migration. The RuvB motors rotate together with the DNA substrate, which together with the progressing nucleotide cycle form the mechanistic basis for DNA recombination by continuous HJ branch migration. Branch migration allows RuvC to scan DNA until it finds its consensus sequence, where it cleaves and resolves cruciform DNA. The chain is Holliday junction branch migration complex subunit RuvB from Staphylococcus haemolyticus (strain JCSC1435).